A 379-amino-acid polypeptide reads, in one-letter code: MKTTFLVSLATAALSSTAAAVSVSGSAEGFAKGVTGGGSATAVYPDTIDELVSYLGDDEARVIVLSKTFDFTDSEGTTTETGCAPWGTDAACQVAINQNDWCTNYQPDAPSVSVTYDNAGTLGITVNSDKTLIGEGSAGVIKGKGLRLVSGTSNVIIQNIAITDINPKYVWGGDAITLNDVDMVWIDHVTTARIARQHIVLGTEADNRVTISNSFINGESDYSATCDGYHYWGIYLDGSSDMVTMKGNYIYHTSGRSPKVQGNTLLHAVNNYWHDNSDHAFEIGEGAYVLAEGNVFQNIPTVAEDPIEGELFASPSESANEVCSTYLGRVCELNGFGSSGTFNQADTDFLSKFEGKNIASADSYSSVASSVASSAGNTL.

Residues 1-20 (MKTTFLVSLATAALSSTAAA) form the signal peptide. 2 disulfides stabilise this stretch: cysteine 83–cysteine 102 and cysteine 92–cysteine 226. Arginine 256 is a catalytic residue. Cysteine 323 and cysteine 331 are oxidised to a cystine.

This sequence belongs to the polysaccharide lyase 1 family.

The protein resides in the secreted. The enzyme catalyses Eliminative cleavage of (1-&gt;4)-alpha-D-galacturonan methyl ester to give oligosaccharides with 4-deoxy-6-O-methyl-alpha-D-galact-4-enuronosyl groups at their non-reducing ends.. Functionally, pectinolytic enzymes consist of four classes of enzymes: pectin lyase, polygalacturonase, pectin methylesterase and rhamnogalacturonase. Among pectinolytic enzymes, pectin lyase is the most important in depolymerization of pectin, since it cleaves internal glycosidic bonds of highly methylated pectins. The chain is Pectin lyase A (pelA) from Emericella nidulans (strain FGSC A4 / ATCC 38163 / CBS 112.46 / NRRL 194 / M139) (Aspergillus nidulans).